The chain runs to 396 residues: D-alanine--D-alanine ligase (396 aa).

One can recognise an ATP-grasp domain in the interval lysine 141–serine 347. An ATP-binding site is contributed by glutamate 174–glutamate 229. 3 residues coordinate Mg(2+): aspartate 301, glutamate 314, and asparagine 316. The segment at alanine 374–alanine 396 is disordered.

The protein belongs to the D-alanine--D-alanine ligase family. The cofactor is Mg(2+). Mn(2+) is required as a cofactor.

It is found in the cytoplasm. It carries out the reaction 2 D-alanine + ATP = D-alanyl-D-alanine + ADP + phosphate + H(+). Its pathway is cell wall biogenesis; peptidoglycan biosynthesis. Cell wall formation. The chain is D-alanine--D-alanine ligase from Treponema pallidum (strain Nichols).